The primary structure comprises 158 residues: Cyclic pyranopterin monophosphate synthase (158 aa).

Substrate contacts are provided by residues 76–78 (MCH) and 114–115 (ME). D129 is a catalytic residue.

Belongs to the MoaC family. In terms of assembly, homohexamer; trimer of dimers.

It catalyses the reaction (8S)-3',8-cyclo-7,8-dihydroguanosine 5'-triphosphate = cyclic pyranopterin phosphate + diphosphate. It functions in the pathway cofactor biosynthesis; molybdopterin biosynthesis. Functionally, catalyzes the conversion of (8S)-3',8-cyclo-7,8-dihydroguanosine 5'-triphosphate to cyclic pyranopterin monophosphate (cPMP). This chain is Cyclic pyranopterin monophosphate synthase, found in Clostridium perfringens (strain 13 / Type A).